Here is a 202-residue protein sequence, read N- to C-terminus: MSSPTTKFSNAASSAGGPRVTPAAASILDPRTGRPVGAGDPYFLEVNHELSDKGFFVAATDDLITWARTGSLMWMTFGLACCAVEMMQVSMPRYDVERFGFAPRASPRQSDVMIVAGTLTNKMAPALRKVYDQMPEPRYVISMGSCANGGGYYHYSYSVVRGCDRIVPIDVYVPGCPPTAEALLYGILLLQKKIRRTGTIER.

Over residues 1 to 13 (MSSPTTKFSNAAS) the composition is skewed to polar residues. The disordered stretch occupies residues 1–32 (MSSPTTKFSNAASSAGGPRVTPAAASILDPRT). Residues cysteine 81, cysteine 82, cysteine 146, and cysteine 176 each coordinate [4Fe-4S] cluster.

This sequence belongs to the complex I 20 kDa subunit family. NDH-1 is composed of 14 different subunits. Subunits NuoB, C, D, E, F, and G constitute the peripheral sector of the complex. [4Fe-4S] cluster serves as cofactor.

The protein resides in the cell inner membrane. The enzyme catalyses a quinone + NADH + 5 H(+)(in) = a quinol + NAD(+) + 4 H(+)(out). In terms of biological role, NDH-1 shuttles electrons from NADH, via FMN and iron-sulfur (Fe-S) centers, to quinones in the respiratory chain. The immediate electron acceptor for the enzyme in this species is believed to be ubiquinone. Couples the redox reaction to proton translocation (for every two electrons transferred, four hydrogen ions are translocated across the cytoplasmic membrane), and thus conserves the redox energy in a proton gradient. This Nitrobacter hamburgensis (strain DSM 10229 / NCIMB 13809 / X14) protein is NADH-quinone oxidoreductase subunit B.